Reading from the N-terminus, the 224-residue chain is Ribonuclease HII (224 aa).

Residues 1-210 form the RNase H type-2 domain; sequence MKLGGIDEAG…LKKIEEKLQK (210 aa). Aspartate 7, glutamate 8, and aspartate 105 together coordinate a divalent metal cation.

The protein belongs to the RNase HII family. The cofactor is Mn(2+). Mg(2+) serves as cofactor.

Its subcellular location is the cytoplasm. It carries out the reaction Endonucleolytic cleavage to 5'-phosphomonoester.. Its function is as follows. Endonuclease that specifically degrades the RNA of RNA-DNA hybrids. This is Ribonuclease HII from Thermococcus sibiricus (strain DSM 12597 / MM 739).